A 409-amino-acid chain; its full sequence is Histidine--tRNA ligase (409 aa).

The protein belongs to the class-II aminoacyl-tRNA synthetase family.

Its subcellular location is the cytoplasm. The enzyme catalyses tRNA(His) + L-histidine + ATP = L-histidyl-tRNA(His) + AMP + diphosphate + H(+). This Methanosphaerula palustris (strain ATCC BAA-1556 / DSM 19958 / E1-9c) protein is Histidine--tRNA ligase.